Reading from the N-terminus, the 410-residue chain is Argininosuccinate synthase (410 aa).

8–16 (AYSGGLDTS) contacts ATP. Tyr86 contacts L-citrulline. ATP is bound at residue Gly116. Residues Thr118, Asn122, and Asp123 each contribute to the L-aspartate site. L-citrulline is bound at residue Asn122. Positions 126, 174, 259, and 271 each coordinate L-citrulline.

Belongs to the argininosuccinate synthase family. Type 1 subfamily. In terms of assembly, homotetramer.

Its subcellular location is the cytoplasm. It catalyses the reaction L-citrulline + L-aspartate + ATP = 2-(N(omega)-L-arginino)succinate + AMP + diphosphate + H(+). It participates in amino-acid biosynthesis; L-arginine biosynthesis; L-arginine from L-ornithine and carbamoyl phosphate: step 2/3. This chain is Argininosuccinate synthase, found in Leuconostoc citreum (strain KM20).